The primary structure comprises 816 residues: Chitin synthase 1 (816 aa).

Residues 1–21 are disordered; sequence MLSQGEILRNPSRTRLQRPPK. The Cytoplasmic portion of the chain corresponds to 1–32; sequence MLSQGEILRNPSRTRLQRPPKSRSERKGWWYR. A helical transmembrane segment spans residues 33–53; it reads VTIFLTCLIPNFMLRCFGMTT. Residues 54-63 lie on the Extracellular side of the membrane; that stretch reads PEVQHAWREK. The chain crosses the membrane as a helical span at residues 64–84; sequence VALCICIFFCWIILGFTTYGM. The Cytoplasmic portion of the chain corresponds to 85–240; that stretch reads NTIICKGSNQ…TPGCLLADTM (156 aa). The helical transmembrane segment at 241-261 threads the bilayer; the sequence is FWITTISIFGLIITKFLLGFF. Residues 262–697 lie on the Extracellular side of the membrane; sequence YSWYAKRRPK…QLVVVMELFG (436 aa). Residues N319 and N664 are each glycosylated (N-linked (GlcNAc...) asparagine). A helical transmembrane segment spans residues 698-718; that stretch reads TLVLPAAIIFTFVMIAVSILI. Residues 719–720 lie on the Cytoplasmic side of the membrane; that stretch reads EP. The chain crosses the membrane as a helical span at residues 721–741; it reads AWVPLIMLVGIFGLPAVLILI. Residues 742 to 745 lie on the Extracellular side of the membrane; it reads TTME. The chain crosses the membrane as a helical span at residues 746 to 766; it reads IQYVFWCLVYILSIPIWNFVL. The Cytoplasmic segment spans residues 767 to 816; the sequence is PTYAFWHFDNFSWGDTRKVDGEGKEDEEGEFDHTKIRIRELEEFLSEANK.

This sequence belongs to the chitin synthase family. Class IV subfamily.

Its subcellular location is the cell membrane. It catalyses the reaction [(1-&gt;4)-N-acetyl-beta-D-glucosaminyl](n) + UDP-N-acetyl-alpha-D-glucosamine = [(1-&gt;4)-N-acetyl-beta-D-glucosaminyl](n+1) + UDP + H(+). In terms of biological role, polymerizes chitin, a structural polymer of the cell wall and septum, by transferring the sugar moiety of UDP-GlcNAc to the non-reducing end of the growing chitin polymer. In Encephalitozoon cuniculi (strain GB-M1) (Microsporidian parasite), this protein is Chitin synthase 1 (CHS1).